The sequence spans 305 residues: Ornithine carbamoyltransferase, catabolic (305 aa).

Residues 50 to 53 (STRT), Gln77, Arg101, and 128 to 131 (HPLQ) each bind carbamoyl phosphate. Residues Asn159, Asp223, and 227–228 (SM) each bind L-ornithine. Residues 263 to 264 (CL) and Arg291 contribute to the carbamoyl phosphate site.

The protein belongs to the aspartate/ornithine carbamoyltransferase superfamily. OTCase family.

It localises to the cytoplasm. The enzyme catalyses carbamoyl phosphate + L-ornithine = L-citrulline + phosphate + H(+). It functions in the pathway amino-acid degradation; L-arginine degradation via ADI pathway; carbamoyl phosphate from L-arginine: step 2/2. Reversibly catalyzes the transfer of the carbamoyl group from carbamoyl phosphate (CP) to the N(epsilon) atom of ornithine (ORN) to produce L-citrulline. This Thermoplasma volcanium (strain ATCC 51530 / DSM 4299 / JCM 9571 / NBRC 15438 / GSS1) protein is Ornithine carbamoyltransferase, catabolic.